The following is a 388-amino-acid chain: Alcohol dehydrogenase-like 1 (388 aa).

Cys-53, Thr-55, His-76, Cys-106, Cys-109, Cys-112, Cys-120, and Cys-185 together coordinate Zn(2+). Thr-55 and His-76 together coordinate an alcohol. NAD(+) is bound at residue Thr-55. Residues 210-215 (GLGAVG), Asp-234, Lys-239, 304-306 (LGM), Phe-331, and Arg-381 contribute to the NAD(+) site.

The protein belongs to the zinc-containing alcohol dehydrogenase family. Class-III subfamily. As to quaternary structure, homodimer. Requires Zn(2+) as cofactor.

It is found in the cytoplasm. It catalyses the reaction a primary alcohol + NAD(+) = an aldehyde + NADH + H(+). The enzyme catalyses a secondary alcohol + NAD(+) = a ketone + NADH + H(+). This Arabidopsis thaliana (Mouse-ear cress) protein is Alcohol dehydrogenase-like 1.